The following is a 575-amino-acid chain: Septation ring formation regulator EzrA (575 aa).

The Extracellular portion of the chain corresponds to 1 to 8 (MSNGQLIY). A helical transmembrane segment spans residues 9-27 (LMVAIAVILVLAYVVAIFL). The Cytoplasmic portion of the chain corresponds to 28 to 575 (RKRNEGRLEA…YEKTRETIRF (548 aa)). 4 coiled-coil regions span residues 105–191 (LKAS…FVTL), 265–301 (LYEA…LYDI), 354–416 (VRRI…IEKD), and 456–526 (TASN…IQEA).

The protein belongs to the EzrA family.

The protein localises to the cell membrane. Its function is as follows. Negative regulator of FtsZ ring formation; modulates the frequency and position of FtsZ ring formation. Inhibits FtsZ ring formation at polar sites. Interacts either with FtsZ or with one of its binding partners to promote depolymerization. The sequence is that of Septation ring formation regulator EzrA from Streptococcus pneumoniae (strain ATCC BAA-255 / R6).